We begin with the raw amino-acid sequence, 589 residues long: Sulfite reductase [NADPH] hemoprotein beta-component (589 aa).

[4Fe-4S] cluster contacts are provided by C443, C449, C488, and C492. Residue C492 coordinates siroheme.

It belongs to the nitrite and sulfite reductase 4Fe-4S domain family. Alpha(8)-beta(8). The alpha component is a flavoprotein, the beta component is a hemoprotein. Siroheme serves as cofactor. Requires [4Fe-4S] cluster as cofactor.

It catalyses the reaction hydrogen sulfide + 3 NADP(+) + 3 H2O = sulfite + 3 NADPH + 4 H(+). It functions in the pathway sulfur metabolism; hydrogen sulfide biosynthesis; hydrogen sulfide from sulfite (NADPH route): step 1/1. Component of the sulfite reductase complex that catalyzes the 6-electron reduction of sulfite to sulfide. This is one of several activities required for the biosynthesis of L-cysteine from sulfate. The chain is Sulfite reductase [NADPH] hemoprotein beta-component from Neisseria meningitidis serogroup C / serotype 2a (strain ATCC 700532 / DSM 15464 / FAM18).